The following is a 72-amino-acid chain: Hypertrehalosaemic prohormone (72 aa).

An N-terminal signal peptide occupies residues 1–21; sequence MNHLVKVLIVVVAIALVLCEA. Residue Gln22 is modified to Pyrrolidone carboxylic acid. Residue Thr31 is modified to Threonine amide.

It belongs to the AKH/HRTH/RPCH family. In terms of tissue distribution, expressed in corpora cardiaca.

It localises to the secreted. Hypertrehalosaemic factors are neuropeptides that elevate the level of trehalose in the hemolymph (trehalose is the major carbohydrate in the hemolymph of insects). This Blaberus discoidalis (Tropical cockroach) protein is Hypertrehalosaemic prohormone.